Consider the following 250-residue polypeptide: Large ribosomal subunit protein uL30B (250 aa).

This sequence belongs to the universal ribosomal protein uL30 family. In terms of assembly, component of the large ribosomal subunit (LSU). Mature yeast ribosomes consist of a small (40S) and a large (60S) subunit. The 40S small subunit contains 1 molecule of ribosomal RNA (18S rRNA) and at least 33 different proteins. The large 60S subunit contains 3 rRNA molecules (25S, 5.8S and 5S rRNA) and at least 46 different proteins.

Its subcellular location is the cytoplasm. It localises to the nucleus. It is found in the nucleolus. In terms of biological role, component of the ribosome, a large ribonucleoprotein complex responsible for the synthesis of proteins in the cell. The small ribosomal subunit (SSU) binds messenger RNAs (mRNAs) and translates the encoded message by selecting cognate aminoacyl-transfer RNA (tRNA) molecules. The large subunit (LSU) contains the ribosomal catalytic site termed the peptidyl transferase center (PTC), which catalyzes the formation of peptide bonds, thereby polymerizing the amino acids delivered by tRNAs into a polypeptide chain. The nascent polypeptides leave the ribosome through a tunnel in the LSU and interact with protein factors that function in enzymatic processing, targeting, and the membrane insertion of nascent chains at the exit of the ribosomal tunnel. In Schizosaccharomyces pombe (strain 972 / ATCC 24843) (Fission yeast), this protein is Large ribosomal subunit protein uL30B (rpl702).